Here is a 204-residue protein sequence, read N- to C-terminus: Large ribosomal subunit protein bL25 (204 aa).

This sequence belongs to the bacterial ribosomal protein bL25 family. CTC subfamily. In terms of assembly, part of the 50S ribosomal subunit; part of the 5S rRNA/L5/L18/L25 subcomplex. Contacts the 5S rRNA. Binds to the 5S rRNA independently of L5 and L18.

Its function is as follows. This is one of the proteins that binds to the 5S RNA in the ribosome where it forms part of the central protuberance. This is Large ribosomal subunit protein bL25 from Burkholderia pseudomallei (strain 668).